Here is a 761-residue protein sequence, read N- to C-terminus: Isocyanide synthase xanB (761 aa).

Positions 24–128 are disordered; sequence LLGSYETKAP…GKGTKADPSH (105 aa). The span at 36 to 48 shows a compositional bias: low complexity; that stretch reads ETSEIAASSSSSE. Positions 93 to 102 are enriched in polar residues; the sequence is TVSTPQSSDN. Residues 115 to 126 show a composition bias toward basic and acidic residues; the sequence is FKDEGKGTKADP.

It belongs to the isocyanide synthase family.

It participates in secondary metabolite biosynthesis. Isocyanide synthase; part of the gene cluster that mediates the biosynthesis of the isocyanide xanthocillin and its derivatives. The first step of the pathway consists in the conversion of tyrosine into a vinyl-isonitrile intermediate by the isocyanide synthase xanB. Subsequent oxidative dimerization of this intermediate to form xanthocillin may involve the cytochrome P450 monooxygenase xanG, whose expression is coregulated with that of XanB. Xanthocillin can be further modified by the isonitrile hydratase-like protein xanA which introduces N-formyl groups and the methyltransferase xanE which introduces methyl groups, leading to the production of several derivatives including fumiformamide. Finally, fumiformamide can be subject to both oxidative and reductive cyclization to yield melanocins E and F, respectively. The protein is Isocyanide synthase xanB of Aspergillus fumigatus (strain ATCC MYA-4609 / CBS 101355 / FGSC A1100 / Af293) (Neosartorya fumigata).